A 392-amino-acid chain; its full sequence is Sulfate adenylyltransferase (392 aa).

Belongs to the sulfate adenylyltransferase family.

It carries out the reaction sulfate + ATP + H(+) = adenosine 5'-phosphosulfate + diphosphate. The protein operates within sulfur metabolism; hydrogen sulfide biosynthesis; sulfite from sulfate: step 1/3. In Nostoc punctiforme (strain ATCC 29133 / PCC 73102), this protein is Sulfate adenylyltransferase.